Consider the following 165-residue polypeptide: Probable DNA polymerase III subunit chi (165 aa).

It belongs to the DNA polymerase III chi/HolC chain family. DNA polymerase III contains a core (composed of alpha, epsilon and theta chains) that associates with a tau subunit. This core dimerizes to form the POLIII' complex. PolIII' associates with the gamma complex (composed of gamma, delta, delta', psi and chi chains) and with the beta chain to form the complete DNA polymerase III complex. Interacts directly with the psi subunit (holD). The only subunit of the DNA polymerase III holoenzyme known to interact with single-stranded DNA binding protein (SSB).

It catalyses the reaction DNA(n) + a 2'-deoxyribonucleoside 5'-triphosphate = DNA(n+1) + diphosphate. In terms of biological role, part of the beta sliding clamp loading complex, which hydrolyzes ATP to load the beta clamp onto primed DNA to form the DNA replication pre-initiation complex. DNA polymerase III is a complex, multichain enzyme responsible for most of the replicative synthesis in bacteria. This DNA polymerase also exhibits 3' to 5' exonuclease activity. This chain is Probable DNA polymerase III subunit chi, found in Rickettsia prowazekii (strain Madrid E).